The chain runs to 113 residues: UPF0122 protein MCAP_0480 (113 aa).

Belongs to the UPF0122 family.

Might take part in the signal recognition particle (SRP) pathway. This is inferred from the conservation of its genetic proximity to ftsY/ffh. May be a regulatory protein. This Mycoplasma capricolum subsp. capricolum (strain California kid / ATCC 27343 / NCTC 10154) protein is UPF0122 protein MCAP_0480.